An 838-amino-acid chain; its full sequence is Urease (838 aa).

The Urease domain maps to 400 to 838 (GAIDCHVHFI…VPLSRNYFLF (439 aa)). Ni(2+) contacts are provided by His-405, His-407, and Lys-488. Lys-488 is subject to N6-carboxylysine. His-490 is a binding site for substrate. Residues His-517 and His-543 each coordinate Ni(2+). His-591 acts as the Proton donor in catalysis. Asp-631 is a Ni(2+) binding site.

In the C-terminal section; belongs to the metallo-dependent hydrolases superfamily. Urease alpha subunit family. As to quaternary structure, homohexamer. Other oligomeric forms may exist depending on pH and presence of salts. Requires Ni(2+) as cofactor. Carboxylation allows a single lysine to coordinate two nickel ions.

The enzyme catalyses urea + 2 H2O + H(+) = hydrogencarbonate + 2 NH4(+). Its pathway is nitrogen metabolism; urea degradation; CO(2) and NH(3) from urea (urease route): step 1/1. Requires the three urease accessory proteins URED, UREF AND UREG for its activation. Its function is as follows. Urea hydrolase involved in nitrogen recycling from ureide, purine, and arginine catabolism. The polypeptide is Urease (Arabidopsis thaliana (Mouse-ear cress)).